Consider the following 93-residue polypeptide: Small ribosomal subunit protein uS19 (93 aa).

Belongs to the universal ribosomal protein uS19 family.

Protein S19 forms a complex with S13 that binds strongly to the 16S ribosomal RNA. The chain is Small ribosomal subunit protein uS19 from Lawsonia intracellularis (strain PHE/MN1-00).